Here is a 286-residue protein sequence, read N- to C-terminus: Putative quercetin 2,3-dioxygenase PA2418 (286 aa).

Positions 61, 63, 105, and 107 each coordinate a divalent metal cation.

The protein belongs to the pirin family. A divalent metal cation serves as cofactor.

It carries out the reaction quercetin + O2 = 2-(3,4-dihydroxybenzoyloxy)-4,6-dihydroxybenzoate + CO. It participates in flavonoid metabolism; quercetin degradation. Functionally, putative quercetin 2,3-dioxygenase. This chain is Putative quercetin 2,3-dioxygenase PA2418, found in Pseudomonas aeruginosa (strain ATCC 15692 / DSM 22644 / CIP 104116 / JCM 14847 / LMG 12228 / 1C / PRS 101 / PAO1).